We begin with the raw amino-acid sequence, 725 residues long: Catalase-peroxidase (725 aa).

Positions 1-20 (MSSEAKCPFPHAANRSRSNQ) are disordered. The segment at residues 91–215 (WHATGTYRTM…LSATHMGLIY (125 aa)) is a cross-link (tryptophyl-tyrosyl-methioninium (Trp-Tyr) (with M-241)). His92 functions as the Proton acceptor in the catalytic mechanism. A cross-link (tryptophyl-tyrosyl-methioninium (Tyr-Met) (with W-91)) is located at residues 215–241 (YVNPEGPDGSGDYMAAAKDIRATFYRM). His256 provides a ligand contact to heme b.

Belongs to the peroxidase family. Peroxidase/catalase subfamily. As to quaternary structure, homodimer or homotetramer. It depends on heme b as a cofactor. In terms of processing, formation of the three residue Trp-Tyr-Met cross-link is important for the catalase, but not the peroxidase activity of the enzyme.

It catalyses the reaction H2O2 + AH2 = A + 2 H2O. The catalysed reaction is 2 H2O2 = O2 + 2 H2O. In terms of biological role, bifunctional enzyme with both catalase and broad-spectrum peroxidase activity. This chain is Catalase-peroxidase, found in Janthinobacterium sp. (strain Marseille) (Minibacterium massiliensis).